A 171-amino-acid polypeptide reads, in one-letter code: Galectin-related protein A (171 aa).

In terms of domain architecture, Galectin spans 38 to 170 (PFCGHIKGGL…INGDLQLTKL (133 aa)).

In terms of biological role, does not bind lactose, and may not bind carbohydrates. The polypeptide is Galectin-related protein A (lgalsl-a) (Xenopus laevis (African clawed frog)).